The following is a 352-amino-acid chain: S-adenosylmethionine:tRNA ribosyltransferase-isomerase (352 aa).

Belongs to the QueA family. In terms of assembly, monomer.

It localises to the cytoplasm. The enzyme catalyses 7-aminomethyl-7-carbaguanosine(34) in tRNA + S-adenosyl-L-methionine = epoxyqueuosine(34) in tRNA + adenine + L-methionine + 2 H(+). It participates in tRNA modification; tRNA-queuosine biosynthesis. In terms of biological role, transfers and isomerizes the ribose moiety from AdoMet to the 7-aminomethyl group of 7-deazaguanine (preQ1-tRNA) to give epoxyqueuosine (oQ-tRNA). The chain is S-adenosylmethionine:tRNA ribosyltransferase-isomerase from Vibrio cholerae serotype O1 (strain ATCC 39315 / El Tor Inaba N16961).